Consider the following 375-residue polypeptide: 4,4'-diaponeurosporenoate glycosyltransferase (375 aa).

The next 4 helical transmembrane spans lie at 3–23, 164–184, 277–297, and 330–350; these read WLSR…ALIF, FYEG…NVFS, IMTA…GLCL, and FSNL…KIFI.

This sequence belongs to the glycosyltransferase 2 family. CrtQ subfamily.

The protein resides in the cell membrane. The protein operates within carotenoid biosynthesis; staphyloxanthin biosynthesis; staphyloxanthin from farnesyl diphosphate: step 4/5. Its function is as follows. Catalyzes the glycosylation of 4,4'-diaponeurosporenoate, i.e. the esterification of glucose at the C1'' position with the carboxyl group of 4,4'-diaponeurosporenic acid, to form glycosyl-4,4'-diaponeurosporenoate. This is a step in the biosynthesis of staphyloxanthin, an orange pigment present in most staphylococci strains. In Staphylococcus aureus (strain USA300), this protein is 4,4'-diaponeurosporenoate glycosyltransferase (crtQ).